The following is a 249-amino-acid chain: MGQKVNPTGFRLGIIRDWASRWYDDSPVISEKIKQDHVIRTYVLARLKKERAGIARIIIERTTKHVKINIYAARPGAVVGRKGEEINNLSQELSRITGKEVKIDVVEVVKPEIEAQLIGDNIAYQLENRVSFRRAMKQAIQQAMRSGAEGVRIRCGGRLGGAEIARSEQYKEGKIPLHTIRANVDYASVTAHTIAGTIGIKVWVYKGEVLVQRIDAIEEDELKRIKERRNDAGARNRDSRTKRRHRTKR.

A KH type-2 domain is found at 39–109; the sequence is IRTYVLARLK…EVKIDVVEVV (71 aa). Residues 226–239 are compositionally biased toward basic and acidic residues; it reads KERRNDAGARNRDS. The interval 226 to 249 is disordered; that stretch reads KERRNDAGARNRDSRTKRRHRTKR. Basic residues predominate over residues 240–249; sequence RTKRRHRTKR.

It belongs to the universal ribosomal protein uS3 family. As to quaternary structure, part of the 30S ribosomal subunit. Forms a tight complex with proteins S10 and S14.

In terms of biological role, binds the lower part of the 30S subunit head. Binds mRNA in the 70S ribosome, positioning it for translation. This is Small ribosomal subunit protein uS3 from Pelodictyon phaeoclathratiforme (strain DSM 5477 / BU-1).